We begin with the raw amino-acid sequence, 125 residues long: Ribosome-binding factor A (125 aa).

It belongs to the RbfA family. As to quaternary structure, monomer. Binds 30S ribosomal subunits, but not 50S ribosomal subunits or 70S ribosomes.

The protein resides in the cytoplasm. Functionally, one of several proteins that assist in the late maturation steps of the functional core of the 30S ribosomal subunit. Associates with free 30S ribosomal subunits (but not with 30S subunits that are part of 70S ribosomes or polysomes). Required for efficient processing of 16S rRNA. May interact with the 5'-terminal helix region of 16S rRNA. The chain is Ribosome-binding factor A from Akkermansia muciniphila (strain ATCC BAA-835 / DSM 22959 / JCM 33894 / BCRC 81048 / CCUG 64013 / CIP 107961 / Muc).